The chain runs to 400 residues: 1-deoxy-D-xylulose 5-phosphate reductoisomerase (400 aa).

Positions 10, 11, 12, 13, 36, 38, and 124 each coordinate NADPH. K125 serves as a coordination point for 1-deoxy-D-xylulose 5-phosphate. E126 serves as a coordination point for NADPH. D150 contributes to the Mn(2+) binding site. 1-deoxy-D-xylulose 5-phosphate-binding residues include S151, E152, S186, and H209. E152 provides a ligand contact to Mn(2+). Residue G215 participates in NADPH binding. The 1-deoxy-D-xylulose 5-phosphate site is built by S222, N227, K228, and E231. A Mn(2+)-binding site is contributed by E231.

The protein belongs to the DXR family. Mg(2+) serves as cofactor. It depends on Mn(2+) as a cofactor.

It carries out the reaction 2-C-methyl-D-erythritol 4-phosphate + NADP(+) = 1-deoxy-D-xylulose 5-phosphate + NADPH + H(+). It participates in isoprenoid biosynthesis; isopentenyl diphosphate biosynthesis via DXP pathway; isopentenyl diphosphate from 1-deoxy-D-xylulose 5-phosphate: step 1/6. Catalyzes the NADPH-dependent rearrangement and reduction of 1-deoxy-D-xylulose-5-phosphate (DXP) to 2-C-methyl-D-erythritol 4-phosphate (MEP). The chain is 1-deoxy-D-xylulose 5-phosphate reductoisomerase from Aliivibrio fischeri (strain MJ11) (Vibrio fischeri).